A 238-amino-acid polypeptide reads, in one-letter code: Trypsin-3 (238 aa).

The signal sequence occupies residues 1–7; sequence FAVAFAA. Positions 8 to 15 are cleaved as a propeptide — activation peptide; sequence PIDDEDDK. Residues 16–236 form the Peptidase S1 domain; that stretch reads IVGGYECRKN…YRSWISSTMS (221 aa). Intrachain disulfides connect Cys22–Cys152, Cys40–Cys56, Cys124–Cys225, Cys131–Cys198, Cys163–Cys177, and Cys188–Cys212. Catalysis depends on His55, which acts as the Charge relay system. The Ca(2+) site is built by Glu67, Asn69, Val72, and Glu77. Asp99 serves as the catalytic Charge relay system. Ser192 functions as the Charge relay system in the catalytic mechanism.

The protein belongs to the peptidase S1 family. It depends on Ca(2+) as a cofactor.

It is found in the secreted. The protein resides in the extracellular space. The catalysed reaction is Preferential cleavage: Arg-|-Xaa, Lys-|-Xaa.. The protein is Trypsin-3 of Salmo salar (Atlantic salmon).